Here is a 245-residue protein sequence, read N- to C-terminus: Transmembrane protein 116 (245 aa).

4 helical membrane passes run 24 to 44, 88 to 108, 141 to 161, and 173 to 195; these read MAFV…FCLG, GIAI…VLLI, FYPV…IIKL, and LYVL…YGWT.

The protein localises to the membrane. The sequence is that of Transmembrane protein 116 (TMEM116) from Homo sapiens (Human).